Reading from the N-terminus, the 243-residue chain is Geranylgeranylglyceryl phosphate synthase (243 aa).

The Mg(2+) site is built by Asp22 and Ser51. Sn-glycerol 1-phosphate-binding positions include 169–175 (YLEAGSG), 200–201 (GG), and 222–223 (GT).

It belongs to the GGGP/HepGP synthase family. Group II subfamily. Requires Mg(2+) as cofactor.

It localises to the cytoplasm. It carries out the reaction sn-glycerol 1-phosphate + (2E,6E,10E)-geranylgeranyl diphosphate = sn-3-O-(geranylgeranyl)glycerol 1-phosphate + diphosphate. It participates in membrane lipid metabolism; glycerophospholipid metabolism. Prenyltransferase that catalyzes the transfer of the geranylgeranyl moiety of geranylgeranyl diphosphate (GGPP) to the C3 hydroxyl of sn-glycerol-1-phosphate (G1P). This reaction is the first ether-bond-formation step in the biosynthesis of archaeal membrane lipids. In Methanosphaera stadtmanae (strain ATCC 43021 / DSM 3091 / JCM 11832 / MCB-3), this protein is Geranylgeranylglyceryl phosphate synthase.